The following is a 68-amino-acid chain: DNA-directed RNA polymerase subunit omega (68 aa).

It belongs to the RNA polymerase subunit omega family. The RNAP catalytic core consists of 2 alpha, 1 beta, 1 beta' and 1 omega subunit. When a sigma factor is associated with the core the holoenzyme is formed, which can initiate transcription.

It carries out the reaction RNA(n) + a ribonucleoside 5'-triphosphate = RNA(n+1) + diphosphate. Its function is as follows. Promotes RNA polymerase assembly. Latches the N- and C-terminal regions of the beta' subunit thereby facilitating its interaction with the beta and alpha subunits. The protein is DNA-directed RNA polymerase subunit omega of Nitrosospira multiformis (strain ATCC 25196 / NCIMB 11849 / C 71).